A 369-amino-acid polypeptide reads, in one-letter code: MVLLKSLVVASLAAAVAAKSAVLDLIPSNFDDVVLKSGKPTLVEFFAPWCGHCKNLAPVYEELATALEYAKDKVQIAKVDADAERALGKRFGVQGFPTLKFFDGKSEQPVDYKGGRDLDSLSNFIAEKTGVKARKKGSAPSLVNILNDATIKGAIGGDKNVLVAFTAPWCGHCKNLAPTWEKLAATFASDPEITIAKVDADAPTGKKSAAEYGVSGFPTIKFFPKGSTTPEDYNGGRSEADLVKFLNEKAGTHRTPGGGLDTVAGTIAALDEIVAKYTGGASLAEVAEEAKEAVKSLKNSAELKYADYYLRVLDKLSKSEGYATKEFARLEGILKKGGLAPAKVDELTVKVNVLRKFVEKAAEEAKEEL.

A signal peptide spans 1–18 (MVLLKSLVVASLAAAVAA). 2 consecutive Thioredoxin domains span residues 19–130 (KSAV…EKTG) and 131–251 (VKAR…EKAG). Residues C50, C53, C170, and C173 each act as nucleophile in the active site. Disulfide bonds link C50/C53 and C170/C173. Positions 366-369 (KEEL) match the Prevents secretion from ER motif.

This sequence belongs to the protein disulfide isomerase family.

It localises to the endoplasmic reticulum lumen. It catalyses the reaction Catalyzes the rearrangement of -S-S- bonds in proteins.. The chain is Protein disulfide-isomerase erp38 (erp38) from Neurospora crassa (strain ATCC 24698 / 74-OR23-1A / CBS 708.71 / DSM 1257 / FGSC 987).